A 1129-amino-acid chain; its full sequence is A-kinase anchor protein 11 (1129 aa).

The span at 1-12 (MQKMQCHLRRPL) shows a compositional bias: basic residues. The disordered stretch occupies residues 1–21 (MQKMQCHLRRPLHSSSSFSSQ). Phosphothreonine is present on residues threonine 251 and threonine 363. Disordered stretches follow at residues 354-376 (IRDR…QTSS), 394-416 (EFAP…SENE), and 434-455 (SEEV…SEHS). The span at 404 to 416 (PHNSSVGSLSENE) shows a compositional bias: polar residues. Residues serine 434, serine 439, and serine 440 each carry the phosphoserine modification. Over residues 442–455 (GEEHPEMDVKSEHS) the composition is skewed to basic and acidic residues. Serine 595 bears the Phosphoserine mark. Phosphothreonine is present on threonine 742. Position 835 is a phosphoserine (serine 835). The interval 905–918 (LAEKIVAEAIEKAE) is PKA-RII binding region. Residues 962–1061 (SKEVEDFQST…QEDGAEGLQP (100 aa)) are disordered. Residues 968–995 (FQSTESLGSQQMNLSVGEDSTGSWSNLS) are compositionally biased toward polar residues. Positions 1002–1011 (DESSSFHHLS) are enriched in basic and acidic residues. Low complexity predominate over residues 1012–1028 (ESSNGNSSSWSSLGLEG). Over residues 1033 to 1042 (NNLSFPTSDS) the composition is skewed to polar residues. Residues 1043 to 1056 (DGPDDRESEQEDGA) show a composition bias toward acidic residues.

In terms of tissue distribution, expressed in brain and testis.

The protein resides in the peroxisome. Its function is as follows. Binds to type II regulatory subunits of protein kinase A and anchors/targets them. In Rattus norvegicus (Rat), this protein is A-kinase anchor protein 11 (Akap11).